The primary structure comprises 248 residues: mRNA-decapping protein OPG122 (248 aa).

A Nudix hydrolase domain is found at 45–227 (HKRVSVSAIL…IAKYALDTAK (183 aa)). The Nudix box motif lies at 126–147 (GIPKRGENVPECLSREIKEEVN). E132 is a binding site for Mg(2+). The active-site Nucleophile is E141. E145 contacts Mn(2+). Position 167 (D167) interacts with Mg(2+).

The protein belongs to the Nudix hydrolase family. Mg(2+) serves as cofactor. The cofactor is Mn(2+).

The protein localises to the host mitochondrion. In terms of biological role, decapping enzyme that remove the protective 5'-cap from both host and viral mRNAs to commit transcripts for decay by the cellular exonuclease XRN1. Preferentially targets spliced mRNAs and since all viral genes are intronless, it preferentially targets host over viral transcripts. Acceleration of the turnover of cellular transcripts promotes the shutoff of host protein synthesis and therefore diminish the magnitude of antiviral response. This chain is mRNA-decapping protein OPG122 (OPG122), found in Bos taurus (Bovine).